A 188-amino-acid chain; its full sequence is Augmin complex subunit dgt4 (188 aa).

The stretch at 141 to 163 (QREFAQNQEALRSLRTAVDGLEN) forms a coiled coil.

As to quaternary structure, component of the augmin complex composed of dgt2, dgt3, dgt4, dgt5, dgt6, msd1, msd5 and wac. The complex interacts directly or indirectly with microtubules and is required for centrosome-independent generation of spindle microtubules.

It localises to the cytoplasm. Its subcellular location is the cytoskeleton. The protein resides in the spindle. As part of the augmin complex, plays a role in centrosome-independent generation of spindle microtubules. The complex is required for mitotic spindle assembly through its involvement in localizing gamma-tubulin to spindle microtubules. The sequence is that of Augmin complex subunit dgt4 from Drosophila melanogaster (Fruit fly).